Here is a 250-residue protein sequence, read N- to C-terminus: Ubiquinone/menaquinone biosynthesis C-methyltransferase UbiE (250 aa).

Residues Thr73, Asp94, 122–123 (NA), and Ser139 contribute to the S-adenosyl-L-methionine site.

The protein belongs to the class I-like SAM-binding methyltransferase superfamily. MenG/UbiE family.

The catalysed reaction is a 2-demethylmenaquinol + S-adenosyl-L-methionine = a menaquinol + S-adenosyl-L-homocysteine + H(+). The enzyme catalyses a 2-methoxy-6-(all-trans-polyprenyl)benzene-1,4-diol + S-adenosyl-L-methionine = a 5-methoxy-2-methyl-3-(all-trans-polyprenyl)benzene-1,4-diol + S-adenosyl-L-homocysteine + H(+). Its pathway is quinol/quinone metabolism; menaquinone biosynthesis; menaquinol from 1,4-dihydroxy-2-naphthoate: step 2/2. The protein operates within cofactor biosynthesis; ubiquinone biosynthesis. Its function is as follows. Methyltransferase required for the conversion of demethylmenaquinol (DMKH2) to menaquinol (MKH2) and the conversion of 2-polyprenyl-6-methoxy-1,4-benzoquinol (DDMQH2) to 2-polyprenyl-3-methyl-6-methoxy-1,4-benzoquinol (DMQH2). The polypeptide is Ubiquinone/menaquinone biosynthesis C-methyltransferase UbiE (Francisella tularensis subsp. tularensis (strain WY96-3418)).